The sequence spans 833 residues: Leucine--tRNA ligase (833 aa).

The short motif at 41 to 52 (PYPSGAGLHVGH) is the 'HIGH' region element. The short motif at 610–614 (KMSKS) is the 'KMSKS' region element. Lys-613 is a binding site for ATP.

It belongs to the class-I aminoacyl-tRNA synthetase family.

Its subcellular location is the cytoplasm. It catalyses the reaction tRNA(Leu) + L-leucine + ATP = L-leucyl-tRNA(Leu) + AMP + diphosphate. In Streptococcus sanguinis (strain SK36), this protein is Leucine--tRNA ligase.